Reading from the N-terminus, the 245-residue chain is tRNA (guanine-N(1)-)-methyltransferase (245 aa).

Residues G114 and 134 to 139 each bind S-adenosyl-L-methionine; that span reads IGDYIL.

This sequence belongs to the RNA methyltransferase TrmD family. In terms of assembly, homodimer.

Its subcellular location is the cytoplasm. The enzyme catalyses guanosine(37) in tRNA + S-adenosyl-L-methionine = N(1)-methylguanosine(37) in tRNA + S-adenosyl-L-homocysteine + H(+). Functionally, specifically methylates guanosine-37 in various tRNAs. The sequence is that of tRNA (guanine-N(1)-)-methyltransferase from Listeria welshimeri serovar 6b (strain ATCC 35897 / DSM 20650 / CCUG 15529 / CIP 8149 / NCTC 11857 / SLCC 5334 / V8).